The sequence spans 208 residues: Small ribosomal subunit protein uS4 (208 aa).

The S4 RNA-binding domain maps to 98-160; it reads CRLDNVVYRM…AKKQSRIQLA (63 aa).

Belongs to the universal ribosomal protein uS4 family. Part of the 30S ribosomal subunit. Contacts protein S5. The interaction surface between S4 and S5 is involved in control of translational fidelity.

One of the primary rRNA binding proteins, it binds directly to 16S rRNA where it nucleates assembly of the body of the 30S subunit. In terms of biological role, with S5 and S12 plays an important role in translational accuracy. This Vesicomyosocius okutanii subsp. Calyptogena okutanii (strain HA) protein is Small ribosomal subunit protein uS4.